A 337-amino-acid chain; its full sequence is RNA 3'-terminal phosphate cyclase (337 aa).

Residues Gln-100 and 281 to 285 (YMGDQ) each bind ATP. Catalysis depends on His-306, which acts as the Tele-AMP-histidine intermediate.

The protein belongs to the RNA 3'-terminal cyclase family. Type 1 subfamily.

The protein resides in the cytoplasm. The catalysed reaction is a 3'-end 3'-phospho-ribonucleotide-RNA + ATP = a 3'-end 2',3'-cyclophospho-ribonucleotide-RNA + AMP + diphosphate. In terms of biological role, catalyzes the conversion of 3'-phosphate to a 2',3'-cyclic phosphodiester at the end of RNA. The mechanism of action of the enzyme occurs in 3 steps: (A) adenylation of the enzyme by ATP; (B) transfer of adenylate to an RNA-N3'P to produce RNA-N3'PP5'A; (C) and attack of the adjacent 2'-hydroxyl on the 3'-phosphorus in the diester linkage to produce the cyclic end product. The biological role of this enzyme is unknown but it is likely to function in some aspects of cellular RNA processing. This Methanothermobacter thermautotrophicus (strain ATCC 29096 / DSM 1053 / JCM 10044 / NBRC 100330 / Delta H) (Methanobacterium thermoautotrophicum) protein is RNA 3'-terminal phosphate cyclase (rtcA).